The primary structure comprises 419 residues: Tyrosine--tRNA ligase (419 aa).

Tyr-34 is an L-tyrosine binding site. The short motif at 39 to 48 is the 'HIGH' region element; sequence PSGDSMHIGH. 2 residues coordinate L-tyrosine: Tyr-168 and Gln-172. Positions 230 to 234 match the 'KMSKS' region motif; the sequence is KFGKS. Residue Lys-233 coordinates ATP. Residues 352 to 418 form the S4 RNA-binding domain; that stretch reads ANLVDWLVTL…GKKKYFLVSY (67 aa).

The protein belongs to the class-I aminoacyl-tRNA synthetase family. TyrS type 1 subfamily. In terms of assembly, homodimer.

It is found in the cytoplasm. The catalysed reaction is tRNA(Tyr) + L-tyrosine + ATP = L-tyrosyl-tRNA(Tyr) + AMP + diphosphate + H(+). Functionally, catalyzes the attachment of tyrosine to tRNA(Tyr) in a two-step reaction: tyrosine is first activated by ATP to form Tyr-AMP and then transferred to the acceptor end of tRNA(Tyr). The protein is Tyrosine--tRNA ligase of Listeria monocytogenes serotype 4b (strain CLIP80459).